A 215-amino-acid chain; its full sequence is Disulfide-bond oxidoreductase YfcG (215 aa).

The GST N-terminal domain occupies 1-87 (MIDLYFAPTP…YLAEKTGLFL (87 aa)). Residues Asn-11, Gln-38, Arg-40, Ile-52, 71–72 (ES), and Arg-132 each bind glutathione. Residues 90–215 (ETRERAATLQ…AQLGDERSDS (126 aa)) enclose the GST C-terminal domain.

The protein belongs to the GST superfamily. Nu-class GSH transferase family. In terms of assembly, homodimer.

Exhibits a very robust glutathione (GSH)-dependent disulfide-bond reductase activity toward the model substrate, 2-hydroxyethyl disulfide; the actual physiological substrates are not known. Also has a low GSH-dependent hydroperoxidase activity toward cumene hydroperoxide, but does not reduce H(2)O(2), tert-butyl hydroperoxide, benzyl peroxide, or lauroyl peroxide. Exhibits little or no GSH transferase activity with most typical electrophilic substrates, and has no detectable transferase activity using glutathionylspermidine (GspSH) as the nucleophilic substrate. Is involved in defense against oxidative stress, probably via its peroxidase activity. This chain is Disulfide-bond oxidoreductase YfcG (yfcG), found in Escherichia coli (strain K12).